The primary structure comprises 61 residues: MAKKAMIIKQQRTPKFSTRAYNRCKICGRPHAYIRKFGICRLCFRQLAYKGQIPGVKKASW.

Zn(2+)-binding residues include Cys24, Cys27, Cys40, and Cys43.

Belongs to the universal ribosomal protein uS14 family. Zinc-binding uS14 subfamily. In terms of assembly, part of the 30S ribosomal subunit. Contacts proteins S3 and S10. Zn(2+) is required as a cofactor.

Its function is as follows. Binds 16S rRNA, required for the assembly of 30S particles and may also be responsible for determining the conformation of the 16S rRNA at the A site. In Ruminiclostridium cellulolyticum (strain ATCC 35319 / DSM 5812 / JCM 6584 / H10) (Clostridium cellulolyticum), this protein is Small ribosomal subunit protein uS14.